A 119-amino-acid chain; its full sequence is Auxin-responsive protein SAUR78 (119 aa).

This sequence belongs to the ARG7 family.

Its function is as follows. May be involved in the regulation of ethylene receptor signaling. Promotes cell expansion and plant growth. The sequence is that of Auxin-responsive protein SAUR78 from Arabidopsis thaliana (Mouse-ear cress).